We begin with the raw amino-acid sequence, 206 residues long: Protein SYM1 (206 aa).

Helical transmembrane passes span 16–36 (PLITNIITTGFLFGSGDYLAQ), 103–123 (LVFAPFIGIPLYYSVMSVLEF), and 155–175 (LFNFALIPVQFRLLVVNIFSI).

It belongs to the peroxisomal membrane protein PXMP2/4 family.

The protein localises to the mitochondrion inner membrane. Its function is as follows. May be involved in cellular response to stress. Required to maintain mitochondrial DNA (mtDNA) integrity and stability. This chain is Protein SYM1 (SYM1), found in Debaryomyces hansenii (strain ATCC 36239 / CBS 767 / BCRC 21394 / JCM 1990 / NBRC 0083 / IGC 2968) (Yeast).